Here is a 129-residue protein sequence, read N- to C-terminus: Small ribosomal subunit protein uS11 (129 aa).

The protein belongs to the universal ribosomal protein uS11 family. In terms of assembly, part of the 30S ribosomal subunit. Interacts with proteins S7 and S18. Binds to IF-3.

Located on the platform of the 30S subunit, it bridges several disparate RNA helices of the 16S rRNA. Forms part of the Shine-Dalgarno cleft in the 70S ribosome. The chain is Small ribosomal subunit protein uS11 from Bartonella henselae (strain ATCC 49882 / DSM 28221 / CCUG 30454 / Houston 1) (Rochalimaea henselae).